The primary structure comprises 622 residues: Low affinity potassium transport system protein Kup (622 aa).

The next 12 helical transmembrane spans lie at 9–29, 49–69, 103–123, 137–157, 165–185, 213–233, 247–267, 276–296, 337–357, 363–383, 396–416, and 419–439; these read LPAI…TSPL, VFGF…IKYL, VIMG…TPAI, PQLD…LFMI, VGKL…GLGL, VSFI…ALYA, WFTV…ALLL, PFFL…AALA, IYIP…IVSF, LAAA…ILST, FVAL…TANL, and LLSG…VMTT.

The protein belongs to the HAK/KUP transporter (TC 2.A.72) family.

The protein localises to the cell inner membrane. The catalysed reaction is K(+)(in) + H(+)(in) = K(+)(out) + H(+)(out). Functionally, responsible for the low-affinity transport of potassium into the cell. Likely operates as a K(+):H(+) symporter. The protein is Low affinity potassium transport system protein Kup of Escherichia coli (strain K12 / MC4100 / BW2952).